Here is a 243-residue protein sequence, read N- to C-terminus: Venom nerve growth factor 5 (243 aa).

The N-terminal stretch at 1–18 (MSMLCYTLIIAFLIGIWA) is a signal peptide. Residues 19-125 (APKSEDNVPL…TLNRNIRTKR (107 aa)) constitute a propeptide that is removed on maturation. Residues 47–66 (GLKTSRNTDQRHPAPKKAED) are compositionally biased toward basic and acidic residues. Residues 47-67 (GLKTSRNTDQRHPAPKKAEDQ) form a disordered region. Disulfide bonds link Cys-139/Cys-204, Cys-182/Cys-232, and Cys-192/Cys-234. Residue Asn-148 is glycosylated (N-linked (GlcNAc...) asparagine).

This sequence belongs to the NGF-beta family. In terms of assembly, homodimer; non-covalently linked. Expressed by the venom gland.

It is found in the secreted. Functionally, nerve growth factor is important for the development and maintenance of the sympathetic and sensory nervous systems. It stimulates division and differentiation of sympathetic and embryonic sensory neurons as well as basal forebrain cholinergic neurons in the brain. Its relevance in the snake venom is not clear. However, it has been shown to inhibit metalloproteinase-dependent proteolysis of platelet glycoprotein Ib alpha, suggesting a metalloproteinase inhibition to prevent metalloprotease autodigestion and/or protection against prey proteases. Binds a lipid between the two protein chains in the homodimer. The lipid-bound form promotes histamine relase from mouse mast cells, contrary to the lipid-free form. This is Venom nerve growth factor 5 from Tropidechis carinatus (Australian rough-scaled snake).